Here is a 602-residue protein sequence, read N- to C-terminus: UPF0329 protein ECU02_0060 (602 aa).

The segment covering 313–345 (EEDERKRAEAESARNREELLRMEEREKGKEKGS) has biased composition (basic and acidic residues). The disordered stretch occupies residues 313 to 407 (EEDERKRAEA…SPKEESKGEE (95 aa)). Basic residues predominate over residues 346-356 (KGKGRKKRGKK). Over residues 357–369 (GAGEAKEESKEED) the composition is skewed to basic and acidic residues. A compositionally biased stretch (acidic residues) spans 370-384 (RGGEEEESVEADVPV).

This sequence belongs to the UPF0329 family.

The polypeptide is UPF0329 protein ECU02_0060 (Encephalitozoon cuniculi (strain GB-M1) (Microsporidian parasite)).